Here is a 702-residue protein sequence, read N- to C-terminus: Transposon Tn7 transposition protein TnsB (702 aa).

A DNA-binding domain 1 (DBD1) region spans residues 1 to 139 (MWQINEVVLF…GQTPNALIPD (139 aa)). Residues 105-124 (VEHVVQEHKVTKATVYKLLR) constitute a DNA-binding region (H-T-H motif). The interval 137-160 (IPDYKNSGAPGERRSATGTAKIGR) is disordered. Residues 140 to 172 (YKNSGAPGERRSATGTAKIGRAREYGKGEGTKV) form a linker 1 region. Positions 173–233 (TPEIERLFRL…QFRYFYDREY (61 aa)) are DNA-binding domain 2 (DBD2). Positions 234-267 (PKAQRLKSRVKAGVYKKDVRPLSSTATSQALGPG) are linker 2. The region spanning 262–480 (QALGPGSRYE…IPVQLWQWGM (219 aa)) is the Integrase catalytic domain. The interval 268-582 (SRYEIDATIA…RSRQFKGLSF (315 aa)) is catalytic domain (CD). Residues 589 to 702 (QAQEKHNKAN…FQDPPEKDES (114 aa)) form a C-terminal domain region. Residues 623-702 (KLTPSTTEPK…FQDPPEKDES (80 aa)) form a disordered region.

Heteromer with TnsA.

Its function is as follows. Sequence-specific, DNA-binding protein required for Tn7 transposition. Recognizes sequences necessary for recombination at both left and right ends of Tn7 and, together with TnsA, forms the transposase. TnsB executes the 3'-DNA strand breakage and joining reactions. TnsB binding introduces DNA bending. There are 3 DNA-binding sites in the left and 4 in the right end of Tn7; as TnsB levels increase more TnsB is bound, suggesting high protein levels contribute to transposon immunity. Binding of TnsB to the transposon right end represses expression of the downstream transposition genes. TnsABC + TnsD promote high-frequency insertion of Tn7 into a specific target site known as att-Tn7 whereas TnsABC + TnsE promote low-frequency insertion into many different sites. The protein is Transposon Tn7 transposition protein TnsB of Escherichia coli.